The chain runs to 746 residues: Catalase-peroxidase (746 aa).

A compositionally biased stretch (polar residues) spans 1–20; sequence MSSDTSSSRPPQPDSGTASK. The tract at residues 1 to 42 is disordered; sequence MSSDTSSSRPPQPDSGTASKSESENPAIPSPKPKAHAPLTNR. The segment at residues 113-236 is a cross-link (tryptophyl-tyrosyl-methioninium (Trp-Tyr) (with M-262)); the sequence is WHAAGTYRIH…YGATTMGLIY (124 aa). The Proton acceptor role is filled by H114. Positions 236–262 form a cross-link, tryptophyl-tyrosyl-methioninium (Tyr-Met) (with W-113); it reads YVNPEGPEGKPDPIAAAIDIRETFGRM. H277 lines the heme b pocket.

The protein belongs to the peroxidase family. Peroxidase/catalase subfamily. As to quaternary structure, homodimer or homotetramer. The cofactor is heme b. In terms of processing, formation of the three residue Trp-Tyr-Met cross-link is important for the catalase, but not the peroxidase activity of the enzyme.

It carries out the reaction H2O2 + AH2 = A + 2 H2O. The enzyme catalyses 2 H2O2 = O2 + 2 H2O. In terms of biological role, bifunctional enzyme with both catalase and broad-spectrum peroxidase activity. May play a role in the intracellular survival of mycobacteria. In Mycobacterium intracellulare, this protein is Catalase-peroxidase.